A 244-amino-acid chain; its full sequence is 7-cyano-7-deazaguanine synthase (244 aa).

14–24 contacts ATP; the sequence is FSGGQDSATCV. Zn(2+)-binding residues include Cys-202, Cys-217, Cys-220, and Cys-223.

This sequence belongs to the QueC family. Zn(2+) is required as a cofactor.

The enzyme catalyses 7-carboxy-7-deazaguanine + NH4(+) + ATP = 7-cyano-7-deazaguanine + ADP + phosphate + H2O + H(+). Its pathway is purine metabolism; 7-cyano-7-deazaguanine biosynthesis. Catalyzes the ATP-dependent conversion of 7-carboxy-7-deazaguanine (CDG) to 7-cyano-7-deazaguanine (preQ(0)). This chain is 7-cyano-7-deazaguanine synthase, found in Burkholderia thailandensis (strain ATCC 700388 / DSM 13276 / CCUG 48851 / CIP 106301 / E264).